The following is a 597-amino-acid chain: uncharacterized protein (597 aa).

The 151-residue stretch at 48–198 (LHPYNPYSSL…DSILSLTKET (151 aa)) folds into the Helicase ATP-binding domain. 61 to 68 (YDVGLGKT) is a binding site for ATP. The DEVH box motif lies at 146 to 149 (DEVH). Positions 275–467 (KINAFINSIK…DIPKIDNEMV (193 aa)) constitute a Helicase C-terminal domain.

Belongs to the helicase family.

The presence of the two linear plasmids, termed pGKL1 and pGKL2, in strains of Kluyveromyces lactis confers the killer phenotype to the host cell, by promoting the secretion of a toxin able to inhibit the growth of sensitive strains. This is an uncharacterized protein from Kluyveromyces lactis (strain ATCC 8585 / CBS 2359 / DSM 70799 / NBRC 1267 / NRRL Y-1140 / WM37) (Yeast).